Here is a 91-residue protein sequence, read N- to C-terminus: Putative membrane protein insertion efficiency factor (91 aa).

It belongs to the UPF0161 family.

Its subcellular location is the cell inner membrane. Functionally, could be involved in insertion of integral membrane proteins into the membrane. This Saccharophagus degradans (strain 2-40 / ATCC 43961 / DSM 17024) protein is Putative membrane protein insertion efficiency factor.